We begin with the raw amino-acid sequence, 616 residues long: Chaperone protein HscA (616 aa).

The protein belongs to the heat shock protein 70 family.

In terms of biological role, chaperone involved in the maturation of iron-sulfur cluster-containing proteins. Has a low intrinsic ATPase activity which is markedly stimulated by HscB. Involved in the maturation of IscU. This chain is Chaperone protein HscA, found in Escherichia coli O7:K1 (strain IAI39 / ExPEC).